The primary structure comprises 107 residues: Keratin, type I cytoskeletal 20 (107 aa).

The head stretch occupies residues 1 to 7 (GNLWVGN). A coil 1A region spans residues 8–43 (EKMTMKNLNDRLASYLEKVRSLEQSNSKFELQIKQW). The IF rod domain maps to 8 to 107 (EKMTMKNLND…ETERGIRLAV (100 aa)). The segment at 44 to 61 (YESNTPGISRDHSAYLQQ) is linker 1. Residues 62 to 107 (IQDLRNQIRDAQLQNARCVLQIDNAKLAAEDFRLKYETERGIRLAV) are coil 1B.

This sequence belongs to the intermediate filament family. In terms of assembly, heterotetramer of two type I and two type II keratins. Associates with KRT8.

In terms of biological role, plays a significant role in maintaining keratin filament organization in intestinal epithelia. When phosphorylated, plays a role in the secretion of mucin in the small intestine. The polypeptide is Keratin, type I cytoskeletal 20 (Sus scrofa (Pig)).